We begin with the raw amino-acid sequence, 311 residues long: tRNA-cytidine(32) 2-sulfurtransferase (311 aa).

The PP-loop motif signature appears at 47–52 (SGGKDS). [4Fe-4S] cluster is bound by residues C122, C125, and C213.

This sequence belongs to the TtcA family. As to quaternary structure, homodimer. Mg(2+) serves as cofactor. Requires [4Fe-4S] cluster as cofactor.

It is found in the cytoplasm. It catalyses the reaction cytidine(32) in tRNA + S-sulfanyl-L-cysteinyl-[cysteine desulfurase] + AH2 + ATP = 2-thiocytidine(32) in tRNA + L-cysteinyl-[cysteine desulfurase] + A + AMP + diphosphate + H(+). The protein operates within tRNA modification. Catalyzes the ATP-dependent 2-thiolation of cytidine in position 32 of tRNA, to form 2-thiocytidine (s(2)C32). The sulfur atoms are provided by the cysteine/cysteine desulfurase (IscS) system. The polypeptide is tRNA-cytidine(32) 2-sulfurtransferase (Shigella boydii serotype 4 (strain Sb227)).